Consider the following 449-residue polypeptide: Phosphoglucosamine mutase (449 aa).

The active-site Phosphoserine intermediate is S101. Positions 101, 242, 244, and 246 each coordinate Mg(2+). Residue S101 is modified to Phosphoserine.

Belongs to the phosphohexose mutase family. Requires Mg(2+) as cofactor. Activated by phosphorylation.

It catalyses the reaction alpha-D-glucosamine 1-phosphate = D-glucosamine 6-phosphate. In terms of biological role, catalyzes the conversion of glucosamine-6-phosphate to glucosamine-1-phosphate. In Bradyrhizobium sp. (strain ORS 278), this protein is Phosphoglucosamine mutase.